Here is a 679-residue protein sequence, read N- to C-terminus: UvrABC system protein B (679 aa).

In terms of domain architecture, Helicase ATP-binding spans 25-412 (EGVNQGQRYQ…DGHLAEQVIR (388 aa)). Residue 38-45 (GATGTGKT) participates in ATP binding. The Beta-hairpin motif lies at 91–114 (YYDYYQPEAYVPVSDTYIAKTSSI). The region spanning 429–591 (QVDDLLAEIR…IVPRPAGKRA (163 aa)) is the Helicase C-terminal domain. The UVR domain occupies 639-674 (PELIDQLETKMKEAAKNLNFEEAASLRDRIKKFRQK).

It belongs to the UvrB family. As to quaternary structure, forms a heterotetramer with UvrA during the search for lesions. Interacts with UvrC in an incision complex.

Its subcellular location is the cytoplasm. Its function is as follows. The UvrABC repair system catalyzes the recognition and processing of DNA lesions. A damage recognition complex composed of 2 UvrA and 2 UvrB subunits scans DNA for abnormalities. Upon binding of the UvrA(2)B(2) complex to a putative damaged site, the DNA wraps around one UvrB monomer. DNA wrap is dependent on ATP binding by UvrB and probably causes local melting of the DNA helix, facilitating insertion of UvrB beta-hairpin between the DNA strands. Then UvrB probes one DNA strand for the presence of a lesion. If a lesion is found the UvrA subunits dissociate and the UvrB-DNA preincision complex is formed. This complex is subsequently bound by UvrC and the second UvrB is released. If no lesion is found, the DNA wraps around the other UvrB subunit that will check the other stand for damage. The sequence is that of UvrABC system protein B from Prochlorococcus marinus (strain MIT 9313).